An 829-amino-acid polypeptide reads, in one-letter code: RNA-directed RNA polymerase (829 aa).

Residues 1–39 (MKEPVDCRLSTPAGFSGTVPPPGRTKAARPGTIPVRRSR) form a disordered region.

In terms of assembly, forms a ribonucleoprotein complex with the 20S RNA, where a single polymerase molecule binds to a single viral RNA genome. Since the viral RNA is not encapsidated, ribonucleoprotein complex formation appears to be the strategy to survive in the host as persistent virus.

Its subcellular location is the host cytoplasm. The enzyme catalyses RNA(n) + a ribonucleoside 5'-triphosphate = RNA(n+1) + diphosphate. In terms of biological role, RNA-directed RNA polymerase that replicates the viral (+) and (-) genome. This is RNA-directed RNA polymerase from Saccharomyces cerevisiae (Baker's yeast).